The chain runs to 462 residues: Na(+)/H(+) antiporter NhaA 2 (462 aa).

Residues 1–31 (MKSSTREQTPVTSPTPHDPTPPTPPRGSTPL) are disordered. Residues 16 to 27 (PHDPTPPTPPRG) show a composition bias toward pro residues. The next 11 membrane-spanning stretches (helical) occupy residues 52–72 (IGGA…NSPW), 96–116 (LTLG…IAGL), 134–154 (LVPV…YVLV), 165–185 (GWAI…AVIS), 195–215 (FLLT…AIFY), 218–238 (TLAV…GLLV), 244–264 (SWWL…ASGI), 309–329 (FAVP…LSGL), 337–357 (VALG…LGAT), 382–402 (LLGG…FGAG), and 408–428 (HVKV…AVVL).

The protein belongs to the NhaA Na(+)/H(+) (TC 2.A.33) antiporter family.

The protein localises to the cell membrane. It catalyses the reaction Na(+)(in) + 2 H(+)(out) = Na(+)(out) + 2 H(+)(in). In terms of biological role, na(+)/H(+) antiporter that extrudes sodium in exchange for external protons. In Kineococcus radiotolerans (strain ATCC BAA-149 / DSM 14245 / SRS30216), this protein is Na(+)/H(+) antiporter NhaA 2.